A 265-amino-acid chain; its full sequence is TATA-box-binding protein (265 aa).

Positions 1-40 (MYNPSQAVPVSLHKNQDNQDGGQQRSHYPQISSQQSQSYL) are disordered. Residues 18 to 29 (NQDGGQQRSHYP) show a composition bias toward polar residues. 2 repeat units span residues 91 to 167 (LQNI…ARVV) and 181 to 258 (IQNM…YPIL).

The protein belongs to the TBP family. As to quaternary structure, belongs to the TFIID complex together with the TBP-associated factors (TAFs). Binds DNA as monomer.

The protein localises to the nucleus. Functionally, general transcription factor that functions at the core of the DNA-binding multiprotein factor TFIID. Binding of TFIID to the TATA box is the initial transcriptional step of the pre-initiation complex (PIC), playing a role in the activation of eukaryotic genes transcribed by RNA polymerase II. This is TATA-box-binding protein from Strongylocentrotus purpuratus (Purple sea urchin).